Consider the following 315-residue polypeptide: Glutathione synthetase (315 aa).

The ATP-grasp domain maps to 125–310 (KLFTAWFSDL…ITGMLMDAIE (186 aa)). Position 151-207 (151-207 (WEKHSDIILKPLDGMGGASIFRVKEGDPNLGVIAETLTEHGTRYCMAQNYLPAIKDG)) interacts with ATP. Mg(2+)-binding residues include Glu281 and Asn283.

It belongs to the prokaryotic GSH synthase family. Mg(2+) serves as cofactor. Requires Mn(2+) as cofactor.

The catalysed reaction is gamma-L-glutamyl-L-cysteine + glycine + ATP = glutathione + ADP + phosphate + H(+). Its pathway is sulfur metabolism; glutathione biosynthesis; glutathione from L-cysteine and L-glutamate: step 2/2. The protein is Glutathione synthetase of Escherichia coli O157:H7.